Reading from the N-terminus, the 415-residue chain is Probable beta-1,4-xylosyltransferase IRX10L (415 aa).

Residue methionine 1 is a topological domain, cytoplasmic. A helical; Signal-anchor for type II membrane protein membrane pass occupies residues 2-22; that stretch reads KLSSCVLIFLLCNTFSSISAF. Residues 23-415 are Lumenal-facing; sequence RLSRSQPTER…AGPVADLKPW (393 aa). Residues asparagine 142 and asparagine 403 are each glycosylated (N-linked (GlcNAc...) asparagine).

It belongs to the glycosyltransferase 47 family. Present in the xylem and phloem, and, to a lower extent, in interfascicular cells. Expressed in the root tip, shoot apical meristem (SAM), xylem cells of roots and stems, and in the vasculature of roots, cotyledons and leaves.

The protein resides in the golgi apparatus membrane. Its function is as follows. Involved in the synthesis of the hemicellulose glucuronoxylan, a major component of secondary cell walls. Probably involved in the elongation of glucuronoxylan xylosyl backbone. The chain is Probable beta-1,4-xylosyltransferase IRX10L (IRX10L) from Arabidopsis thaliana (Mouse-ear cress).